The primary structure comprises 806 residues: Putative phage-related protein YobO (806 aa).

The interval 1 to 23 (MVHFKNCPDPSLNANSQSHPEFS) is disordered. The span at 12-21 (LNANSQSHPE) shows a compositional bias: polar residues. PbH1 repeat units follow at residues 199–221 (VEYGWIKDVEAINAGLHGIDITS), 237–259 (SRYIWIDNCVTYGSGDDGITTHY), 260–292 (SEYIFISNCHSGNPRGTEFAEGVSNSNGIEIDD), 294–315 (SRHVWLLNNFTSGNIRGVEVKA), 419–441 (SQNITINGIKIRGFKKAGVDINL), and 448–470 (TDYIKISNFDIYKSAPKGISIGG).

The polypeptide is Putative phage-related protein YobO (yobO) (Bacillus subtilis (strain 168)).